Reading from the N-terminus, the 295-residue chain is Ent-pimara-9(11),15-diene synthase (295 aa).

Belongs to the terpene synthase family. Monomer. A divalent metal cation serves as cofactor.

It catalyses the reaction ent-copalyl diphosphate = ent-pimara-9(11),15-diene + diphosphate. It participates in antibiotic biosynthesis. Involved in viguiepinol biosynthesis. Catalyzes the conversion of copalyl diphosphate (ent-CDP) into pimara-9(11),15-diene (PMD). In Streptomyces sp. (strain KO-3988), this protein is Ent-pimara-9(11),15-diene synthase.